Here is a 31-residue protein sequence, read N- to C-terminus: Acetyl-CoA carboxylase (31 aa).

The interval 1 to 31 (RISSSVIAHKTQLDSGKREVYSSHMQLGGPK) is disordered. Residues 11–21 (TQLDSGKREVY) are compositionally biased toward basic and acidic residues.

The catalysed reaction is hydrogencarbonate + acetyl-CoA + ATP = malonyl-CoA + ADP + phosphate + H(+). It participates in lipid metabolism; malonyl-CoA biosynthesis; malonyl-CoA from acetyl-CoA: step 1/1. This Catharanthus roseus (Madagascar periwinkle) protein is Acetyl-CoA carboxylase.